Here is a 425-residue protein sequence, read N- to C-terminus: SRRM2 protein homolog rsr-2 (425 aa).

Residues 57 to 100 (MDHNRKRQIEVKCTEFEMLLEDKGLDDEDIERKVGEYRKNLLKQ) enclose the CWF21 domain. Disordered stretches follow at residues 109 to 131 (DEEL…RDKM) and 161 to 425 (ESEL…SDSE). Basic and acidic residues predominate over residues 164–178 (LPQKDDKEKLLETLR). Over residues 189 to 202 (SSSSSSSSSSSSES) the composition is skewed to low complexity. A compositionally biased stretch (basic residues) spans 210–221 (RKDRKKKEKKQK). Basic and acidic residues-rich tracts occupy residues 222-251 (LKEM…KEEP) and 259-305 (DSRK…EDRT). Basic residues predominate over residues 306-317 (VRRRSPERRRQQ). Basic and acidic residues-rich tracts occupy residues 321–332 (SVERRKSPQRRD), 355–366 (SRMDELEVKQEP), and 383–398 (RVEK…RKSS). Residues 399–425 (SESSSGSSDSDSSSDSSSSSDSSSDSE) are compositionally biased toward low complexity.

The protein belongs to the CWC21 family. In terms of assembly, interacts with RNA polymerase II subunit ama-1, binding to both hyperphosphorylated and hypophosphorylated forms, but more strongly when ama-1 is phosphorylated at 'Ser-5' of the C-terminal heptapeptide repeat. Interacts with pre-mRNA-processing factor prp-19. May also interact with pre-mRNA-splicing factor 8 homolog prp-8. Expressed in the proximal germline, but not in the most distal part where mitosis takes place. May be expressed ubiquitously in somatic cells.

It localises to the nucleus. The protein resides in the chromosome. Its subcellular location is the nuclear body. Functionally, plays a role in pre-mRNA splicing as component of the spliceosome. Involved in modulating global transcription, probably acting via interaction with RNA polymerase II. Influences the chromatin distribution and phosphorylation state of RNA polymerase II subunit ama-1. Involved in regulating the germline sex determination pathway. The protein is SRRM2 protein homolog rsr-2 of Caenorhabditis elegans.